The sequence spans 1360 residues: DNA-directed RNA polymerase subunit beta (1360 aa).

This sequence belongs to the RNA polymerase beta chain family. The RNAP catalytic core consists of 2 alpha, 1 beta, 1 beta' and 1 omega subunit. When a sigma factor is associated with the core the holoenzyme is formed, which can initiate transcription.

It carries out the reaction RNA(n) + a ribonucleoside 5'-triphosphate = RNA(n+1) + diphosphate. Its function is as follows. DNA-dependent RNA polymerase catalyzes the transcription of DNA into RNA using the four ribonucleoside triphosphates as substrates. The sequence is that of DNA-directed RNA polymerase subunit beta from Desulfotalea psychrophila (strain LSv54 / DSM 12343).